The sequence spans 228 residues: UPF0173 metal-dependent hydrolase LMOf2365_1599 (228 aa).

The protein belongs to the UPF0173 family.

The polypeptide is UPF0173 metal-dependent hydrolase LMOf2365_1599 (Listeria monocytogenes serotype 4b (strain F2365)).